The following is a 525-amino-acid chain: Light-independent protochlorophyllide reductase subunit B (525 aa).

[4Fe-4S] cluster is bound at residue Asp36. Asp290 (proton donor) is an active-site residue. 425–426 (GL) contacts substrate.

Belongs to the ChlB/BchB/BchZ family. In terms of assembly, protochlorophyllide reductase is composed of three subunits; ChlL, ChlN and ChlB. Forms a heterotetramer of two ChlB and two ChlN subunits. [4Fe-4S] cluster is required as a cofactor.

The enzyme catalyses chlorophyllide a + oxidized 2[4Fe-4S]-[ferredoxin] + 2 ADP + 2 phosphate = protochlorophyllide a + reduced 2[4Fe-4S]-[ferredoxin] + 2 ATP + 2 H2O. The protein operates within porphyrin-containing compound metabolism; chlorophyll biosynthesis (light-independent). Functionally, component of the dark-operative protochlorophyllide reductase (DPOR) that uses Mg-ATP and reduced ferredoxin to reduce ring D of protochlorophyllide (Pchlide) to form chlorophyllide a (Chlide). This reaction is light-independent. The NB-protein (ChlN-ChlB) is the catalytic component of the complex. The sequence is that of Light-independent protochlorophyllide reductase subunit B from Prochlorococcus marinus (strain MIT 9312).